The primary structure comprises 201 residues: MAGKSSLFKVILLGDGGVGKSSLMNRYVTNKFDTQLFHTIGVEFLNKDLEVDGHFVTMQIWDTAGQERFRSLRTPFYRGSDCCLLTFSVDDSQSFQNLSNWKKEFIYYADVKEPESFPFVILGNKIDISERQVSTEEAQAWCRDNGDYPYFETSAKDATNVAAAFEEAVRRVLATEDRSDHLIQTDTVNLHRKPKPSSSCC.

Residue Ala2 is modified to N-acetylalanine. Gly17 provides a ligand contact to GDP. GTP contacts are provided by Gly17, Val18, Gly19, Lys20, Ser21, Ser22, Thr34, His38, and Thr39. Gly19, Lys20, Ser21, and Ser22 together coordinate GDP. A Mg(2+)-binding site is contributed by Ser21. The Switch 1 motif lies at 31–42 (KFDTQLFHTIGV). Thr39 and Asp62 together coordinate Mg(2+). Positions 64–78 (AGQERFRSLRTPFYR) match the Switch 2 motif. Positions 65, 124, 125, 127, 155, and 156 each coordinate GTP. Asn124, Lys125, Asp127, Ala155, and Lys156 together coordinate GDP. Position 179 is a phosphoserine (Ser179). Thr187 carries the post-translational modification Phosphothreonine. 2 S-geranylgeranyl cysteine lipidation sites follow: Cys200 and Cys201.

Belongs to the small GTPase superfamily. Rab family. Interacts (preferentially in its GTP-bound form) with GCC2 (via its GRIP domain). Interacts (GTP-bound form) with SGSM1; the GDP-bound form has much lower affinity for SGSM1. Interacts with SGSM2. The GTP-bound form but not the GDP-bound form interacts with HPS4 and BLOC-3 complex (heterodimer of HPS1 and HPS4) but does not interact with HPS1 alone. Interacts (GTP-bound form) with NDE1; two RAB9A-GTP molecules lie on the opposite sides of the NDE1 homodimer; the interaction leads to RAB9A-dynein motor tethering. Interacts (GTP-bound form) with NDEL1. The cofactor is Mg(2+).

It is found in the cell membrane. Its subcellular location is the endoplasmic reticulum membrane. It localises to the golgi apparatus membrane. The protein resides in the late endosome. The protein localises to the cytoplasmic vesicle. It is found in the phagosome membrane. Its subcellular location is the phagosome. It localises to the cytoplasmic vesicle membrane. The protein resides in the melanosome. It catalyses the reaction GTP + H2O = GDP + phosphate + H(+). With respect to regulation, regulated by guanine nucleotide exchange factors (GEFs) which promote the exchange of bound GDP for free GTP. Regulated by GTPase activating proteins (GAPs) which increase the GTP hydrolysis activity. Inhibited by GDP dissociation inhibitors (GDIs). The small GTPases Rab are key regulators of intracellular membrane trafficking, from the formation of transport vesicles to their fusion with membranes. Rabs cycle between an inactive GDP-bound form and an active GTP-bound form that is able to recruit to membranes different sets of downstream effectors directly responsible for vesicle formation, movement, tethering and fusion. RAB9A is involved in the transport of proteins between the endosomes and the trans-Golgi network (TGN). Specifically uses NDE1/NDEL1 as an effector to interact with the dynein motor complex in order to control retrograde trafficking of RAB9-associated late endosomes to the TGN. Involved in the recruitment of SGSM2 to melanosomes and is required for the proper trafficking of melanogenic enzymes TYR, TYRP1 and DCT/TYRP2 to melanosomes in melanocytes. This is Ras-related protein Rab-9A from Homo sapiens (Human).